We begin with the raw amino-acid sequence, 302 residues long: Putative cyclin-D6-1 (302 aa).

This sequence belongs to the cyclin family. Cyclin D subfamily.

This is Putative cyclin-D6-1 (CYCD6-1) from Arabidopsis thaliana (Mouse-ear cress).